The primary structure comprises 34 residues: Antimicrobial peptide Alo-2 (34 aa).

3 disulfide bridges follow: C1/C18, C8/C22, and C17/C33.

Its subcellular location is the secreted. Functionally, has antifungal activity against C.glabrata. The protein is Antimicrobial peptide Alo-2 of Acrocinus longimanus (Giant harlequin beetle).